A 213-amino-acid polypeptide reads, in one-letter code: Uridine kinase (213 aa).

12–19 (GGSCSGKT) lines the ATP pocket.

This sequence belongs to the uridine kinase family.

It is found in the cytoplasm. It carries out the reaction uridine + ATP = UMP + ADP + H(+). It catalyses the reaction cytidine + ATP = CMP + ADP + H(+). It functions in the pathway pyrimidine metabolism; CTP biosynthesis via salvage pathway; CTP from cytidine: step 1/3. The protein operates within pyrimidine metabolism; UMP biosynthesis via salvage pathway; UMP from uridine: step 1/1. This is Uridine kinase (udk) from Mycoplasma genitalium (strain ATCC 33530 / DSM 19775 / NCTC 10195 / G37) (Mycoplasmoides genitalium).